A 256-amino-acid polypeptide reads, in one-letter code: tRNA pseudouridine synthase A 1 (256 aa).

The active-site Nucleophile is the Asp53. Substrate is bound at residue Tyr111.

The protein belongs to the tRNA pseudouridine synthase TruA family. Homodimer.

It carries out the reaction uridine(38/39/40) in tRNA = pseudouridine(38/39/40) in tRNA. In terms of biological role, formation of pseudouridine at positions 38, 39 and 40 in the anticodon stem and loop of transfer RNAs. The sequence is that of tRNA pseudouridine synthase A 1 from Protochlamydia amoebophila (strain UWE25).